The sequence spans 232 residues: Ribosomal RNA large subunit methyltransferase E (232 aa).

S-adenosyl-L-methionine contacts are provided by G64, W66, D97, D113, and D138. K178 serves as the catalytic Proton acceptor.

The protein belongs to the class I-like SAM-binding methyltransferase superfamily. RNA methyltransferase RlmE family.

The protein resides in the cytoplasm. It catalyses the reaction uridine(2552) in 23S rRNA + S-adenosyl-L-methionine = 2'-O-methyluridine(2552) in 23S rRNA + S-adenosyl-L-homocysteine + H(+). Its function is as follows. Specifically methylates the uridine in position 2552 of 23S rRNA at the 2'-O position of the ribose in the fully assembled 50S ribosomal subunit. The chain is Ribosomal RNA large subunit methyltransferase E from Leptothrix cholodnii (strain ATCC 51168 / LMG 8142 / SP-6) (Leptothrix discophora (strain SP-6)).